Consider the following 785-residue polypeptide: Probable splicing factor 3A subunit 1 (785 aa).

M1 is modified (N-acetylmethionine). Residues 1–42 (MFSSMQILPLEAPPTDGKLGPLPPSQLTDQEVEERELQAEQN) are disordered. One copy of the SURP motif 1 repeat lies at 71-113 (IVEKTAQFVSKNGLEFEKRIIVSNEKNAKFNFLKSSDPYHAFY). The tract at residues 124-175 (NKDGAQGTDDSDGTTDPQLDTGAADESEAGDTQPDLQAQFRIPSKPLEAPEP) is disordered. The SURP motif 2 repeat unit spans residues 193-235 (IIKLTAQFVARNGKSFLTGLSNRENNNPQFHFMKPTHSMFTFF). Disordered stretches follow at residues 522–554 (NANG…GVPI) and 639–713 (RPYG…PNEN). 2 stretches are compositionally biased toward pro residues: residues 543-554 (AALPPPRPGVPI) and 653-674 (QPPP…PPLP). Over residues 677–686 (PEAKRQKFDE) the composition is skewed to basic and acidic residues. A Ubiquitin-like domain is found at 707 to 782 (VSKPNENDGQ…LTLSLRERGG (76 aa)).

As to quaternary structure, component of splicing factor SF3A which is composed of three subunits.

Its subcellular location is the nucleus. This is Probable splicing factor 3A subunit 1 from Arabidopsis thaliana (Mouse-ear cress).